The primary structure comprises 4008 residues: Extracellular matrix organizing protein FRAS1 (4008 aa).

Residues 1 to 26 (MGVLKVWLGLALALAEFAVLPHHSEG) form the signal peptide. VWFC domains follow at residues 27–88 (ACVY…PECV), 93–153 (GSCH…PVCV), 157–217 (KPCS…PQCS), 219–279 (RSCS…EECV), and 283–343 (GSCS…PECI). The Extracellular segment spans residues 27 to 3901 (ACVYQDSLLA…AASLSQTGAS (3875 aa)). Residue serine 344 is modified to Phosphoserine. Positions 347–417 (GYCVYEETGE…VKGQCCPDCT (71 aa)) constitute a VWFC 6 domain. The N-linked (GlcNAc...) asparagine glycan is linked to asparagine 361. FU repeat units lie at residues 409 to 460 (KGQC…GFYQ), 462 to 505 (GSLC…GFYQ), 507 to 553 (RHSC…GFYN), 555 to 599 (QGTC…GYYA), 602 to 647 (TGRC…GFYS), 649 to 705 (HGVC…HFYL), 708 to 753 (TGIC…GYFH), 755 to 800 (EGSC…EQFL), 803 to 852 (VGYC…GYYA), 854 to 900 (RGAC…GHYL), 903 to 948 (NHVC…QYYL), 952 to 997 (TNTC…SFYQ), 999 to 1042 (SGLC…GYFA), and 1046 to 1089 (KHKC…GFSV). Residue asparagine 728 is glycosylated (N-linked (GlcNAc...) asparagine). N-linked (GlcNAc...) asparagine glycans are attached at residues asparagine 1093 and asparagine 1108. CSPG repeat units follow at residues 1102–1197 (TPSL…LKIS), 1217–1308 (APYV…LQAN), 1329–1438 (GLQL…FEVS), 1463–1559 (APKV…FSFA), 1595–1689 (PVFQ…ISVT), 1710–1810 (GPRL…FSVS), and 1833–1936 (PPVI…FYVS). Asparagine 1504 carries N-linked (GlcNAc...) asparagine glycosylation. The N-linked (GlcNAc...) asparagine glycan is linked to asparagine 1777. Residues asparagine 1948 and asparagine 1978 are each glycosylated (N-linked (GlcNAc...) asparagine). CSPG repeat units follow at residues 1957–2057 (EPPR…FSLT), 2078–2177 (TPHL…FDVV), 2199–2291 (PPVI…FTLS), 2311–2404 (SLPV…FTVS), and 2439–2536 (TPRI…FLVK). 5 Calx-beta domains span residues 2543-2646 (VSDN…VELS), 2659-2770 (AKVI…IALA), 2784-2890 (AKVL…VFLS), 2905-3007 (IAIN…VYLG), and 3025-3129 (ATIT…LVLG). 3 N-linked (GlcNAc...) asparagine glycosylation sites follow: asparagine 2563, asparagine 2664, and asparagine 2682. Residues asparagine 2908, asparagine 2985, asparagine 3070, asparagine 3218, asparagine 3676, and asparagine 3875 are each glycosylated (N-linked (GlcNAc...) asparagine). The helical transmembrane segment at 3902-3922 (IGSALAAIMLLLLVFLVACFI) threads the bilayer. The Cytoplasmic portion of the chain corresponds to 3923 to 4008 (NRKCQKQRKK…HNNLQDGTEV (86 aa)).

This sequence belongs to the FRAS1 family. In terms of tissue distribution, expressed in many adult tissues, with highest levels in kidney, pancreas and thalamus. Relatively high expression was also detected in fetal kidney and heart.

The protein localises to the cell membrane. Involved in extracellular matrix organization. Required for the regulation of epidermal-basement membrane adhesion responsible for proper organogenesis during embryonic development. Involved in brain organization and function. The protein is Extracellular matrix organizing protein FRAS1 of Homo sapiens (Human).